The following is a 358-amino-acid chain: MLLYVTDYLARFDSGFHVFQYLTLRAILGVLTALVISFVVGPPMIRRLKFVGQPVRSNGPTTHLCKAGTPTMGGALILVAIAAATLLWADLSNRYIWVVLVVTLLFGGVGFVDDYKKLLAKDSRGLTSRYKYFWQSVIALGVALFLYFTASVAAETELIVPFFKDVAVNLGGYYVLLTYFVVVGSSNAVNLTDGLDGLAVLPTVLVGGALGIFAYAAGHSGFAQYLGIPYIPEAGELVVFCGALVGAGLGFLWFNAYPAQVFMGDIGALALGAALGILAVLVRQELVLFIMGGVFVVETVSVMLQVASYKLTGRRIFRMAPLHHHFEIKGWPEPRVIVRFWIITVILVLIGLATLKIR.

10 helical membrane-spanning segments follow: residues 21 to 41 (YLTL…FVVG), 71 to 91 (TMGG…WADL), 95 to 115 (YIWV…VDDY), 133 to 153 (FWQS…ASVA), 166 to 186 (VAVN…VGSS), 197 to 217 (GLAV…AYAA), 234 to 254 (AGEL…FLWF), 261 to 281 (VFMG…LAVL), 286 to 306 (LVLF…MLQV), and 337 to 357 (IVRF…TLKI).

It belongs to the glycosyltransferase 4 family. MraY subfamily. Mg(2+) is required as a cofactor.

The protein resides in the cell inner membrane. The catalysed reaction is UDP-N-acetyl-alpha-D-muramoyl-L-alanyl-gamma-D-glutamyl-meso-2,6-diaminopimeloyl-D-alanyl-D-alanine + di-trans,octa-cis-undecaprenyl phosphate = di-trans,octa-cis-undecaprenyl diphospho-N-acetyl-alpha-D-muramoyl-L-alanyl-D-glutamyl-meso-2,6-diaminopimeloyl-D-alanyl-D-alanine + UMP. It functions in the pathway cell wall biogenesis; peptidoglycan biosynthesis. Catalyzes the initial step of the lipid cycle reactions in the biosynthesis of the cell wall peptidoglycan: transfers peptidoglycan precursor phospho-MurNAc-pentapeptide from UDP-MurNAc-pentapeptide onto the lipid carrier undecaprenyl phosphate, yielding undecaprenyl-pyrophosphoryl-MurNAc-pentapeptide, known as lipid I. This Nitrosococcus oceani (strain ATCC 19707 / BCRC 17464 / JCM 30415 / NCIMB 11848 / C-107) protein is Phospho-N-acetylmuramoyl-pentapeptide-transferase.